The primary structure comprises 210 residues: HTH-type transcriptional repressor FabR (210 aa).

The region spanning Lys-10 to Leu-70 is the HTH tetR-type domain. Positions Ser-33–Phe-52 form a DNA-binding region, H-T-H motif.

In terms of assembly, homodimer.

The protein localises to the cytoplasm. Its function is as follows. Represses the transcription of fabB, involved in unsaturated fatty acid (UFA) biosynthesis. By controlling UFA production, FabR directly influences the physical properties of the membrane bilayer. The protein is HTH-type transcriptional repressor FabR of Salmonella choleraesuis (strain SC-B67).